Consider the following 238-residue polypeptide: Sugar fermentation stimulation protein homolog (238 aa).

Belongs to the SfsA family.

This chain is Sugar fermentation stimulation protein homolog, found in Haemophilus influenzae (strain 86-028NP).